The primary structure comprises 382 residues: Toluene efflux pump periplasmic linker protein TtgD (382 aa).

A signal peptide spans 1-23 (MRLERALRARQLIPLAAIWLLVG). The N-palmitoyl cysteine moiety is linked to residue C24. C24 carries the S-diacylglycerol cysteine lipid modification. A coiled-coil region spans residues 100–136 (YEALLARAEASLLTAQNLARRYERLLDTNAISQQQYD).

The protein belongs to the membrane fusion protein (MFP) (TC 8.A.1) family.

It localises to the cell inner membrane. Functionally, the periplasmic linker protein component of an inducible organic solvent efflux pump. Involved in export of toluene and styrene but not of m-xylene, propylbenzene or ethylbenzene. Is not involved in antibiotic or AMP efflux. The protein is Toluene efflux pump periplasmic linker protein TtgD (ttgD) of Pseudomonas putida (strain DOT-T1E).